The chain runs to 849 residues: Coiled-coil domain-containing protein 87 (849 aa).

Residues 387–415 (RHPAAGHRLEELEKMLRNLQEEEASGQWD) adopt a coiled-coil conformation.

Belongs to the CCDC87 family.

Functionally, plays a role in spermatogenesis, where it is important for normal sperm head morphology. Also required for the acrosome reaction and thus normal male fertility. In Homo sapiens (Human), this protein is Coiled-coil domain-containing protein 87 (CCDC87).